A 347-amino-acid polypeptide reads, in one-letter code: Heat-inducible transcription repressor HrcA (347 aa).

This sequence belongs to the HrcA family.

In terms of biological role, negative regulator of class I heat shock genes (grpE-dnaK-dnaJ and groELS operons). Prevents heat-shock induction of these operons. The polypeptide is Heat-inducible transcription repressor HrcA (Enterococcus faecalis (strain ATCC 700802 / V583)).